The primary structure comprises 195 residues: dTTP/UTP pyrophosphatase (195 aa).

The Proton acceptor role is filled by D70.

The protein belongs to the Maf family. YhdE subfamily. A divalent metal cation is required as a cofactor.

Its subcellular location is the cytoplasm. It catalyses the reaction dTTP + H2O = dTMP + diphosphate + H(+). The enzyme catalyses UTP + H2O = UMP + diphosphate + H(+). Functionally, nucleoside triphosphate pyrophosphatase that hydrolyzes dTTP and UTP. May have a dual role in cell division arrest and in preventing the incorporation of modified nucleotides into cellular nucleic acids. This Photorhabdus laumondii subsp. laumondii (strain DSM 15139 / CIP 105565 / TT01) (Photorhabdus luminescens subsp. laumondii) protein is dTTP/UTP pyrophosphatase.